We begin with the raw amino-acid sequence, 85 residues long: Small ribosomal subunit protein bS20 (85 aa).

Belongs to the bacterial ribosomal protein bS20 family.

In terms of biological role, binds directly to 16S ribosomal RNA. This chain is Small ribosomal subunit protein bS20, found in Borrelia garinii subsp. bavariensis (strain ATCC BAA-2496 / DSM 23469 / PBi) (Borreliella bavariensis).